Reading from the N-terminus, the 225-residue chain is 2-C-methyl-D-erythritol 4-phosphate cytidylyltransferase (225 aa).

The protein belongs to the IspD/TarI cytidylyltransferase family. IspD subfamily.

The enzyme catalyses 2-C-methyl-D-erythritol 4-phosphate + CTP + H(+) = 4-CDP-2-C-methyl-D-erythritol + diphosphate. It participates in isoprenoid biosynthesis; isopentenyl diphosphate biosynthesis via DXP pathway; isopentenyl diphosphate from 1-deoxy-D-xylulose 5-phosphate: step 2/6. Functionally, catalyzes the formation of 4-diphosphocytidyl-2-C-methyl-D-erythritol from CTP and 2-C-methyl-D-erythritol 4-phosphate (MEP). The sequence is that of 2-C-methyl-D-erythritol 4-phosphate cytidylyltransferase from Prochlorococcus marinus (strain NATL2A).